Here is a 270-residue protein sequence, read N- to C-terminus: Probable septum site-determining protein MinC (270 aa).

The interval aspartate 105–alanine 129 is disordered. Residues glutamate 116–alanine 129 show a composition bias toward low complexity.

Belongs to the MinC family. Interacts with MinD and FtsZ.

In terms of biological role, cell division inhibitor that blocks the formation of polar Z ring septums. Rapidly oscillates between the poles of the cell to destabilize FtsZ filaments that have formed before they mature into polar Z rings. Prevents FtsZ polymerization. The sequence is that of Probable septum site-determining protein MinC from Burkholderia mallei (strain NCTC 10247).